The following is a 442-amino-acid chain: Serum response factor-binding protein 1 (442 aa).

2 coiled-coil regions span residues 55–77 and 118–140; these read EDALLKNQRRAQRLLQEIHAMKE and LLKRKVDALKAAIQAFKDARQNA. Disordered regions lie at residues 137-336 and 358-442; these read RQNA…LETH and FHSL…TFDD. Basic and acidic residues-rich tracts occupy residues 149–159 and 167–188; these read ASKESQCEDIP and ESQHPERTVVGEQKGKDKDPTT. A Glycyl lysine isopeptide (Lys-Gly) (interchain with G-Cter in SUMO2) cross-link involves residue Lys202. Ser215 is subject to Phosphoserine. Positions 237-247 are enriched in polar residues; that stretch reads GNHSQGKASTR. Residues 266–278 show a composition bias toward acidic residues; sequence VSEEEKEYFDDST. 3 positions are modified to phosphoserine: Ser277, Ser292, and Ser294. Lys329 participates in a covalent cross-link: Glycyl lysine isopeptide (Lys-Gly) (interchain with G-Cter in SUMO2). A Phosphoserine modification is found at Ser362. The span at 367–382 shows a compositional bias: basic and acidic residues; sequence SRRDPREQAPKNKAPD.

Interacts with SRF. Forms complexes with SRF and SRF cofactors ARID2, MYOCD and NKX2-5. Interacts with the N-terminus of SLC2A4.

It localises to the cytoplasm. The protein localises to the perinuclear region. Its function is as follows. May be involved in regulating transcriptional activation of cardiac genes during the aging process. May play a role in biosynthesis and/or processing of SLC2A4 in adipose cells. This Rattus norvegicus (Rat) protein is Serum response factor-binding protein 1.